The following is a 542-amino-acid chain: Protein DETOXIFICATION 34 (542 aa).

A run of 12 helical transmembrane segments spans residues 97–117, 127–147, 176–196, 204–224, 240–260, 272–292, 316–336, 344–364, 390–410, 435–455, 462–482, and 491–511; these read APIA…SIFV, AVAI…LGMA, ILLG…PLLI, IAEI…ALAI, IMAW…YLFI, AAFD…VVGW, FASA…IVLT, IAVG…MLFI, VIVT…VILI, LLGI…VAVG, VAYI…FLLG, and GIWI…LYMI.

It belongs to the multi antimicrobial extrusion (MATE) (TC 2.A.66.1) family.

The protein resides in the membrane. This is Protein DETOXIFICATION 34 from Arabidopsis thaliana (Mouse-ear cress).